Here is a 366-residue protein sequence, read N- to C-terminus: Protein-glutamate methylesterase/protein-glutamine glutaminase (366 aa).

A Response regulatory domain is found at Arg-5–Arg-123. Asp-56 bears the 4-aspartylphosphate mark. One can recognise a CheB-type methylesterase domain in the interval Pro-163–Gln-355. Catalysis depends on residues Ser-175, His-201, and Asp-297.

This sequence belongs to the CheB family. Phosphorylated by CheA. Phosphorylation of the N-terminal regulatory domain activates the methylesterase activity.

It localises to the cytoplasm. It carries out the reaction [protein]-L-glutamate 5-O-methyl ester + H2O = L-glutamyl-[protein] + methanol + H(+). The catalysed reaction is L-glutaminyl-[protein] + H2O = L-glutamyl-[protein] + NH4(+). Involved in chemotaxis. Part of a chemotaxis signal transduction system that modulates chemotaxis in response to various stimuli. Catalyzes the demethylation of specific methylglutamate residues introduced into the chemoreceptors (methyl-accepting chemotaxis proteins or MCP) by CheR. Also mediates the irreversible deamidation of specific glutamine residues to glutamic acid. The protein is Protein-glutamate methylesterase/protein-glutamine glutaminase of Nocardioides sp. (strain ATCC BAA-499 / JS614).